We begin with the raw amino-acid sequence, 429 residues long: Endo-1,4-beta-xylanase 1 (429 aa).

An N-terminal signal peptide occupies residues 1–19 (MQTKSILTAALLAAAPASA). The GH10 domain maps to 43-336 (NSDQQYNRIL…KPAWTSISSV (294 aa)). The active-site Proton donor is the glutamate 150. Glutamate 257 acts as the Nucleophile in catalysis. A disulfide bond links cysteine 286 and cysteine 292. Positions 364–395 (TTPPPISSPIVPSTTTTSAVPTTTVSPPEPEQ) are disordered. Residues 371–389 (SPIVPSTTTTSAVPTTTVS) are compositionally biased toward low complexity. The CBM1 domain occupies 393 to 429 (PEQTRWGQCGGIGWNGPTKCQSPWTCTRLNDWYFQCL).

It belongs to the glycosyl hydrolase 10 (cellulase F) family.

It localises to the secreted. It carries out the reaction Endohydrolysis of (1-&gt;4)-beta-D-xylosidic linkages in xylans.. The protein operates within glycan degradation; xylan degradation. Functionally, endo-1,4-beta-xylanase involved in the hydrolysis of xylan, a major structural heterogeneous polysaccharide found in plant biomass representing the second most abundant polysaccharide in the biosphere, after cellulose. This chain is Endo-1,4-beta-xylanase 1, found in Humicola insolens (Soft-rot fungus).